The following is a 279-amino-acid chain: MGLLSADLLITLQILPVFFSNCLFLALYDSVILLKHMVLFLSRSKSARGEWRRMLTSEGLRCVWNSFLLDAYKQVKLGGEAPNSSVIHIAKGNDGSNSSWKSVGGKCGTKCHLLDFANSERPLVVNFGSATUPPFTSQLSAFSKLVEEFSGVADFLLVYIDEAHPSDGWAAPGISPSSFEVKKHRNQEDRCAAAHQLLERFSLPPQCQVVADCMDNNANVAYGVSFERVCIVQRQKIAYLGGKGPFFYNLQEVRLWLEQNFSKRUNPLSTEDLSTDVSL.

The Lumenal portion of the chain corresponds to 1 to 7; that stretch reads MGLLSAD. A helical; Signal-anchor for type III membrane protein membrane pass occupies residues 8–28; it reads LLITLQILPVFFSNCLFLALY. Over 29 to 279 the chain is Cytoplasmic; sequence DSVILLKHMV…TEDLSTDVSL (251 aa). The active site involves Sec132. Non-standard amino acids (selenocysteine) are located at Sec132 and Sec265.

This sequence belongs to the iodothyronine deiodinase family. As to quaternary structure, predominantly monomer. Can form homodimers but homodimerization is not essential for enzyme activity. Highly expressed in liver and in various parts of the brain including telencephalon, hippocampus, cerebellum, and brain stem, and weakly expressed in thyroid, lung, and small intestine. Not detected in skeletal muscle, heart atria or ventricle, gizzard or kidney.

It is found in the endoplasmic reticulum membrane. It catalyses the reaction 3,3',5-triiodo-L-thyronine + iodide + A + H(+) = L-thyroxine + AH2. It carries out the reaction 3,3'-diiodo-L-thyronine + iodide + A + H(+) = 3,3',5'-triiodo-L-thyronine + AH2. The enzyme catalyses 3'-iodo-L-thyronine + iodide + A + H(+) = 3',5'-diiodo-L-thyronine + AH2. The catalysed reaction is 3,3'-diiodothyronamine + iodide + A + H(+) = 3,3',5'-triiodothyronamine + AH2. It catalyses the reaction 3'-iodothyronamine + iodide + A + H(+) = 3',5'-diiodothyronamine + AH2. Not inhibited by N(6)-propylthiouracil. In terms of biological role, plays a crucial role in the metabolism of thyroid hormones (TH) and has specific roles in TH activation and inactivation by deiodination. Catalyzes the deiodination of L-thyroxine (T4) to 3,5,3'-triiodothyronine (T3) and 3,3',5'-triiodothyronine (rT3) to 3,3'-diiodothyronine (3,3'-T2) via outer-ring deiodination (ORD). Catalyzes the deiodination of 3',5'-diiodothyronine (3',5'-T2) to 3'-monoiodothyronine (3'-T1) via ORD. Catalyzes the phenolic ring deiodinations of 3,3',5'-triiodothyronamine and 3',5'- diiodothyronamine. The chain is Type II iodothyronine deiodinase (DIO2) from Gallus gallus (Chicken).